A 133-amino-acid polypeptide reads, in one-letter code: Small ribosomal subunit protein uS8 (133 aa).

It belongs to the universal ribosomal protein uS8 family. Part of the 30S ribosomal subunit. Contacts proteins S5 and S12.

One of the primary rRNA binding proteins, it binds directly to 16S rRNA central domain where it helps coordinate assembly of the platform of the 30S subunit. This chain is Small ribosomal subunit protein uS8, found in Chlamydia pneumoniae (Chlamydophila pneumoniae).